Here is a 146-residue protein sequence, read N- to C-terminus: Transcriptional regulator MraZ (146 aa).

2 consecutive SpoVT-AbrB domains span residues 9–55 (ASAL…PRPA) and 81–124 (AMDV…DVQR).

Belongs to the MraZ family. As to quaternary structure, forms oligomers.

The protein resides in the cytoplasm. It is found in the nucleoid. The sequence is that of Transcriptional regulator MraZ from Methylibium petroleiphilum (strain ATCC BAA-1232 / LMG 22953 / PM1).